The sequence spans 225 residues: Peroxiredoxin-2E-2, chloroplastic (225 aa).

The transit peptide at methionine 1–arginine 42 directs the protein to the chloroplast. The region spanning isoleucine 63–leucine 225 is the Thioredoxin domain. Cysteine 111 serves as the catalytic Cysteine sulfenic acid (-SOH) intermediate.

The protein belongs to the peroxiredoxin family. Prx5 subfamily. Monomer.

Its subcellular location is the plastid. The protein localises to the chloroplast stroma. The enzyme catalyses [glutaredoxin]-dithiol + a hydroperoxide = [glutaredoxin]-disulfide + an alcohol + H2O. Its function is as follows. Thiol-specific peroxidase that catalyzes the reduction of hydrogen peroxide and organic hydroperoxides to water and alcohols, respectively. Plays a role in cell protection against oxidative stress by detoxifying peroxides. May be involved in chloroplast redox homeostasis. This Oryza sativa subsp. japonica (Rice) protein is Peroxiredoxin-2E-2, chloroplastic (PRXIIE-2).